The following is a 396-amino-acid chain: Putative glycosyltransferase HOC1 (396 aa).

Residues 2–13 (AKTTKRASSFRR) lie on the Cytoplasmic side of the membrane. The chain crosses the membrane as a helical; Signal-anchor for type II membrane protein span at residues 14 to 34 (LMIFAIIALISLAFGVRYLFH). The Lumenal portion of the chain corresponds to 35–396 (NSNATDLQKI…WKNTPKVEQK (362 aa)). A glycan (N-linked (GlcNAc...) asparagine) is linked at Asn37.

The protein belongs to the glycosyltransferase 32 family. In terms of assembly, component of the M-Pol II complex composed of ANP1, MNN9, MNN10, MNN11 and HOC1.

Its subcellular location is the golgi apparatus. It is found in the cis-Golgi network membrane. Its function is as follows. The M-Pol II complex possesses alpha-1,6-mannosyltransferase activity and is probably involved in the elongation of the mannan backbone of N-linked glycans on cell wall and periplasmic proteins. The protein is Putative glycosyltransferase HOC1 (HOC1) of Saccharomyces cerevisiae (strain ATCC 204508 / S288c) (Baker's yeast).